The following is a 198-amino-acid chain: ATP-dependent Clp protease proteolytic subunit (198 aa).

S101 functions as the Nucleophile in the catalytic mechanism. H126 is a catalytic residue.

It belongs to the peptidase S14 family. As to quaternary structure, component of the chloroplastic Clp protease core complex.

The protein resides in the plastid. Its subcellular location is the chloroplast stroma. The catalysed reaction is Hydrolysis of proteins to small peptides in the presence of ATP and magnesium. alpha-casein is the usual test substrate. In the absence of ATP, only oligopeptides shorter than five residues are hydrolyzed (such as succinyl-Leu-Tyr-|-NHMec, and Leu-Tyr-Leu-|-Tyr-Trp, in which cleavage of the -Tyr-|-Leu- and -Tyr-|-Trp bonds also occurs).. Functionally, cleaves peptides in various proteins in a process that requires ATP hydrolysis. Has a chymotrypsin-like activity. Plays a major role in the degradation of misfolded proteins. The sequence is that of ATP-dependent Clp protease proteolytic subunit from Solanum bulbocastanum (Wild potato).